Consider the following 134-residue polypeptide: Prolactin (134 aa).

Cysteine 126 and cysteine 134 are joined by a disulfide.

Belongs to the somatotropin/prolactin family.

It is found in the secreted. The protein is Prolactin of Bufo japonicus (Japanese common toad).